The sequence spans 1073 residues: Pleckstrin homology domain-containing family G member 5 (1073 aa).

Disordered regions lie at residues 1 to 28, 91 to 135, 217 to 261, 278 to 309, and 367 to 388; these read MGTG…SQLL, VSTR…ARRR, PGDE…ESSL, GEAG…GINE, and SWEE…RLED. 2 stretches are compositionally biased toward basic and acidic residues: residues 217 to 231 and 249 to 260; these read PGDE…KDSK and ERVDPQSRRESS. The span at 367–381 shows a compositional bias: acidic residues; that stretch reads SWEEEEEDDEEDEES. The region spanning 406 to 598 is the DH domain; sequence HQQEAVWELL…ERFIHHVNTC (193 aa). Positions 654-754 constitute a PH domain; that stretch reads QLLLEGSLRM…WVDTIYNAQN (101 aa). Disordered regions lie at residues 762-818, 833-873, and 899-925; these read QLSA…TSDG, TLSS…GPVD, and PVVE…TPVQ. A compositionally biased stretch (acidic residues) spans 777–790; sequence LEEEEDEQEEEGEE. Composition is skewed to polar residues over residues 791–809 and 844–864; these read SGTS…SNSL and VSSQ…TPTS. Phosphothreonine is present on Thr-793. Ser-798 carries the post-translational modification Phosphoserine. Positions 900 to 915 are enriched in pro residues; that stretch reads VVEPAPVPQTPSPQPS. Thr-909 carries the phosphothreonine modification. Phosphoserine occurs at positions 911, 936, and 941. The interval 993–1046 is disordered; it reads MCDPCHGPQLSESENRPSHMTGGPADSARRRCREMPSGTMSRVQSEPPSGVSAQ. Residues 1030–1039 show a composition bias toward polar residues; the sequence is GTMSRVQSEP.

As to quaternary structure, interacts with GIPC1/synectin and RHOA. As to expression, expressed in neurons and glial cells of the peripheral nervous system, with highest levels of expression in the brain and sciatic nerve endoneurium. Isoform 2 is expressed at detectable levels only in malignant cells.

The protein localises to the cytoplasm. It localises to the perinuclear region. It is found in the cell membrane. The protein resides in the cell junction. Its subcellular location is the cell projection. The protein localises to the lamellipodium. Its function is as follows. Functions as a guanine exchange factor (GEF) for RAB26 and thus regulates autophagy of synaptic vesicles in axon terminal of motoneurons. Involved in the control of neuronal cell differentiation. Plays a role in angiogenesis through regulation of endothelial cells chemotaxis. Also affects the migration, adhesion, and matrix/bone degradation in macrophages and osteoclasts. The protein is Pleckstrin homology domain-containing family G member 5 (Plekhg5) of Mus musculus (Mouse).